A 63-amino-acid chain; its full sequence is Large ribosomal subunit protein uL30 (63 aa).

The protein belongs to the universal ribosomal protein uL30 family. Part of the 50S ribosomal subunit.

The chain is Large ribosomal subunit protein uL30 from Coxiella burnetii (strain CbuK_Q154) (Coxiella burnetii (strain Q154)).